Reading from the N-terminus, the 645-residue chain is Minor extracellular protease Epr (645 aa).

The first 27 residues, 1–27 (MKNMSCKLVVSVTLFFSFLTIGPLAHA), serve as a signal peptide directing secretion. Positions 28-103 (QNSSEKEVIV…AADSTDFKVL (76 aa)) are excised as a propeptide. The Peptidase S8 domain maps to 115–382 (QWNLEPIQVK…YGLIQYKAQA (268 aa)). Catalysis depends on charge relay system residues D142, H172, and S326. Disordered stretches follow at residues 490-577 (KQAK…KTAL) and 591-645 (AEAK…KPKK). Basic and acidic residues predominate over residues 491–508 (QAKDKVAKAEKSKKKTDV). The segment covering 522-547 (SEKTSLQKRLNKVKSTNLKTAQQSVS) has biased composition (polar residues). A compositionally biased stretch (basic and acidic residues) spans 592–610 (EAKKVETAKAKVKKAEKDK).

Belongs to the peptidase S8 family. May undergo two steps of processing in its passage through the cell membrane: removal of the N-terminal signal sequence and cleavage of the C-terminal domain. Several active forms of Epr with molecular masses between 40 and 34 kDa were found in the medium of B.subtilis cultures. The size variation of the active forms expressed by the complete epr gene appears to be the result of partial removal of the C-terminus either by processing or degradation.

It is found in the secreted. The protein localises to the cell wall. With respect to regulation, requires Ca(2+) for stability. Activity is inhibited by phenylmethylsulfonyl fluoride (PMSF) and EDTA. Functionally, serine protease. Involved in the production of the competence and sporulation stimulating factor CSF. In addition, is essential for swarming motility. Plays a key role in DegU-mediated swarming motility. The protease activity is dispensable for swarming. Not essential for growth or sporulation. The sequence is that of Minor extracellular protease Epr from Bacillus subtilis (strain 168).